We begin with the raw amino-acid sequence, 428 residues long: Dihydroorotase (428 aa).

Positions 59 and 61 each coordinate Zn(2+). Substrate is bound by residues 61 to 63 (HLR) and N93. Zn(2+)-binding residues include D151, H178, and H231. Position 277 (N277) interacts with substrate. A Zn(2+)-binding site is contributed by D304. D304 is a catalytic residue. Residues H308 and 322–323 (FG) each bind substrate.

The protein belongs to the metallo-dependent hydrolases superfamily. DHOase family. Class I DHOase subfamily. The cofactor is Zn(2+).

The catalysed reaction is (S)-dihydroorotate + H2O = N-carbamoyl-L-aspartate + H(+). Its pathway is pyrimidine metabolism; UMP biosynthesis via de novo pathway; (S)-dihydroorotate from bicarbonate: step 3/3. Catalyzes the reversible cyclization of carbamoyl aspartate to dihydroorotate. This is Dihydroorotase from Bacillus cereus (strain ATCC 10987 / NRS 248).